The sequence spans 1334 residues: WASH complex subunit 2 (1334 aa).

The tract at residues 1–219 is sufficient for interaction with WASHC3, WASHC4 and WASHC5; required for interaction with WASHC1; it reads MNRTSPDSER…VGSDRGSIVD (219 aa). S157, S159, S204, S205, and S209 each carry phosphoserine. Residues 201–213 are compositionally biased toward low complexity; sequence GELSSEEGSVGSD. The segment at 201-471 is disordered; sequence GELSSEEGSV…SKPSKTDKVK (271 aa). Acidic residues-rich tracts occupy residues 219-232 and 249-274; these read DSEDEKEEEESDED and SDEEEDDDGDLFADSEKEGDDIEDIE. Residue S284 is modified to Phosphoserine. Over residues 289-324 the composition is skewed to basic and acidic residues; the sequence is LAARIKGDISNQRKEGQTDGKPQKTVKEKKERRTPA. Phosphothreonine is present on T322. Positions 347-594 are sufficient for interaction with CCDC93; sequence SRGGLFSNGQ…QTSSLQPQSQ (248 aa). The tract at residues 348-1334 is interaction with VPS35; it reads RGGLFSNGQG…DDPLNAFGSQ (987 aa). An LFa 1 motif is present at residues 358–368; sequence LFDDEDESDLF. At S388 the chain carries Phosphoserine. 2 short sequence motifs (LFa) span residues 441-457 and 476-485; these read LFDDDDNDNDEDDNNFF and IFDDDEGDLF. Acidic residues predominate over residues 442–454; it reads FDDDDNDNDEDDN. The segment at 492–650 is disordered; the sequence is LPAASVSQTH…DSGATQGQEA (159 aa). Residues 513–530 are compositionally biased toward polar residues; sequence LPSSKNLKLVSETKTQKG. Short sequence motifs (LFa) lie at residues 531 to 542 and 566 to 577; these read LFSDEEDSEDLF and LFGDEDEEDSLF. S533 and S538 each carry phosphoserine. Residues 541-561 show a composition bias toward low complexity; sequence LFSSQSSSKPKSASLPSSQPP. 2 stretches are compositionally biased toward polar residues: residues 584 to 594 and 601 to 611; these read KQTSSLQPQSQ and EQPSKKTSALL. S613 and S614 each carry phosphoserine. Basic and acidic residues predominate over residues 625 to 639; it reads SHTKLASDNKSKGEL. 2 consecutive short sequence motifs (LFa) follow at residues 658-670 and 686-698; these read LFEDDDDDEVDLF and LFEDDAESGSSLF. Residues 691-837 are disordered; sequence AESGSSLFGL…SRPKSTGVFQ (147 aa). S723, S747, S752, S783, and S798 each carry phosphoserine. Over residues 800–811 the composition is skewed to acidic residues; sequence FDEDEDKVEDES. The span at 818 to 830 shows a compositional bias: basic and acidic residues; that stretch reads DGREKGLKTDSRP. Short sequence motifs (LFa) lie at residues 835–843 and 852–858; these read VFQDEELLF and DPDVDLF. Disordered stretches follow at residues 862-948 and 1014-1225; these read KKIR…PSSR and AQAD…SKTH. A phosphoserine mark is found at S870 and S873. Positions 874-884 match the LFa 10 motif; it reads LFGDDEDDDLF. Positions 894-906 are enriched in basic and acidic residues; sequence PEKKGTLKKDHPV. Residues 908-919 are compositionally biased toward polar residues; that stretch reads LKNQDPLDSTQG. Residues 932-1334 form an interaction with phospholipids region; that stretch reads QDSSGLTPFK…DDPLNAFGSQ (403 aa). Residues 1023-1041 show a composition bias toward basic residues; that stretch reads NKSRVKVRGKRRPQTRAAR. The segment at 1024–1042 is required for interaction with F-actin-capping protein subunit alpha (CAPZA1 or CAPZA2 or CAPZA3); it reads KSRVKVRGKRRPQTRAARR. Phosphoserine is present on residues S1049, S1067, S1084, and S1109. 3 consecutive short sequence motifs (LFa) follow at residues 1124–1131, 1164–1178, and 1194–1202; these read LFDSGDIF, AFPDLSEGSSTEDLF, and LLEDEEDLF. Residues S1169, S1172, and S1173 each carry the phosphoserine modification. Residues 1203–1225 show a composition bias toward basic and acidic residues; the sequence is ADPRGKKNERKPDSHQDSVSKTH. 3 consecutive short sequence motifs (LFa) follow at residues 1227 to 1233, 1255 to 1263, and 1283 to 1292; these read IFEDDIF, LFDDNIDIF, and MFDDDTDDIF. Positions 1294–1334 are disordered; that stretch reads SGLQAKASKPKSQSAEAASEQRSEHKVASIFDDPLNAFGSQ. Residues 1297–1311 show a composition bias toward low complexity; the sequence is QAKASKPKSQSAEAA. An LFa 17 motif is present at residues 1323-1331; the sequence is IFDDPLNAF. Phosphoserine is present on S1333.

The protein belongs to the FAM21 family. As to quaternary structure, component of the WASH core complex also described as WASH regulatory complex (SHRC) composed of WASHC1, WASHC2, WASHC3, WASHC4 and WASHC5; in the complex interacts (via N-terminus) directly with WASHC1. The WASH core complex associates with the F-actin-capping protein dimer (formed by CAPZA1, CAPZA2 or CAPZA3 and CAPZB) in a transient or substoichiometric manner which was initially described as WASH complex. Interacts with VPS35; mediates the association with the retromer CSC complex. Interacts with FKBP15. Interacts with CCDC93, CCDC22, VPS35L; indicative for an association of the WASH core complex with the CCC and retriever complexes. Directly interacts with TBC1D23.

The protein localises to the early endosome membrane. It localises to the cell membrane. In terms of biological role, acts as a component of the WASH core complex that functions as a nucleation-promoting factor (NPF) at the surface of endosomes, where it recruits and activates the Arp2/3 complex to induce actin polymerization, playing a key role in the fission of tubules that serve as transport intermediates during endosome sorting. Mediates the recruitment of the WASH core complex to endosome membranes via binding to phospholipids and VPS35 of the retromer CSC. Mediates the recruitment of the F-actin-capping protein dimer to the WASH core complex probably promoting localized F-actin polymerization needed for vesicle scission. Via its C-terminus binds various phospholipids, most strongly phosphatidylinositol 4-phosphate (PtdIns-(4)P), phosphatidylinositol 5-phosphate (PtdIns-(5)P) and phosphatidylinositol 3,5-bisphosphate (PtdIns-(3,5)P2). Involved in the endosome-to-plasma membrane trafficking and recycling of SNX27-retromer-dependent cargo proteins, such as GLUT1. Required for the association of DNAJC13, ENTR1, ANKRD50 with retromer CSC subunit VPS35. Required for the endosomal recruitment of CCC and retriever complexes subunits COMMD1 and CCDC93 as well as the retrievere complex subunit VPS35L. In Mus musculus (Mouse), this protein is WASH complex subunit 2.